The chain runs to 338 residues: Ketol-acid reductoisomerase (NADP(+)) (338 aa).

Residues 1 to 181 enclose the KARI N-terminal Rossmann domain; that stretch reads MNVFYDKDAD…GGGRAGIIET (181 aa). Residues 24-27, Arg47, and Ser52 each bind NADP(+); that span reads YGSQ. Residue His107 is part of the active site. Gly133 contributes to the NADP(+) binding site. One can recognise a KARI C-terminal knotted domain in the interval 182 to 327; the sequence is NFREETETDL…AKLRAMMPWI (146 aa). 4 residues coordinate Mg(2+): Asp190, Glu194, Glu226, and Glu230. Ser251 lines the substrate pocket.

This sequence belongs to the ketol-acid reductoisomerase family. It depends on Mg(2+) as a cofactor.

The enzyme catalyses (2R)-2,3-dihydroxy-3-methylbutanoate + NADP(+) = (2S)-2-acetolactate + NADPH + H(+). It catalyses the reaction (2R,3R)-2,3-dihydroxy-3-methylpentanoate + NADP(+) = (S)-2-ethyl-2-hydroxy-3-oxobutanoate + NADPH + H(+). It participates in amino-acid biosynthesis; L-isoleucine biosynthesis; L-isoleucine from 2-oxobutanoate: step 2/4. It functions in the pathway amino-acid biosynthesis; L-valine biosynthesis; L-valine from pyruvate: step 2/4. In terms of biological role, involved in the biosynthesis of branched-chain amino acids (BCAA). Catalyzes an alkyl-migration followed by a ketol-acid reduction of (S)-2-acetolactate (S2AL) to yield (R)-2,3-dihydroxy-isovalerate. In the isomerase reaction, S2AL is rearranged via a Mg-dependent methyl migration to produce 3-hydroxy-3-methyl-2-ketobutyrate (HMKB). In the reductase reaction, this 2-ketoacid undergoes a metal-dependent reduction by NADPH to yield (R)-2,3-dihydroxy-isovalerate. The sequence is that of Ketol-acid reductoisomerase (NADP(+)) from Burkholderia multivorans (strain ATCC 17616 / 249).